A 155-amino-acid chain; its full sequence is Ribonuclease H (155 aa).

An RNase H type-1 domain is found at 4-146; sequence NIDVVEIYTD…CDRLATEQIK (143 aa). 4 residues coordinate Mg(2+): Asp13, Glu51, Asp73, and Asp138.

This sequence belongs to the RNase H family. As to quaternary structure, monomer. Requires Mg(2+) as cofactor.

It localises to the cytoplasm. It catalyses the reaction Endonucleolytic cleavage to 5'-phosphomonoester.. Endonuclease that specifically degrades the RNA of RNA-DNA hybrids. The chain is Ribonuclease H from Thermoanaerobacter pseudethanolicus (strain ATCC 33223 / 39E) (Clostridium thermohydrosulfuricum).